The primary structure comprises 349 residues: GMP reductase (349 aa).

108 to 131 (LDFFKIKKIFSLSSELKYICIDVA) provides a ligand contact to NADP(+). 2 residues coordinate K(+): Gly181 and Gly183. The Thioimidate intermediate role is filled by Cys186. Residue 216–239 (IISDGGCTVSGDIAKAFGGGADFV) participates in NADP(+) binding.

This sequence belongs to the IMPDH/GMPR family. GuaC type 1 subfamily. As to quaternary structure, homotetramer.

It catalyses the reaction IMP + NH4(+) + NADP(+) = GMP + NADPH + 2 H(+). Its function is as follows. Catalyzes the irreversible NADPH-dependent deamination of GMP to IMP. It functions in the conversion of nucleobase, nucleoside and nucleotide derivatives of G to A nucleotides, and in maintaining the intracellular balance of A and G nucleotides. The sequence is that of GMP reductase from Buchnera aphidicola subsp. Schizaphis graminum (strain Sg).